The sequence spans 156 residues: Snaclec trimecetin subunit alpha (156 aa).

Positions 1 to 23 (MGRFIFVSFGLLVVFLSLSGTGA) are cleaved as a signal peptide. Disulfide bonds link Cys-25/Cys-36, Cys-53/Cys-150, and Cys-125/Cys-142. Residues 32–151 (FRRYCYKPFK…CGERNLFMCK (120 aa)) enclose the C-type lectin domain.

This sequence belongs to the snaclec family. As to quaternary structure, heterodimer of subunits alpha and beta; disulfide-linked. As to expression, expressed by the venom gland.

Its subcellular location is the secreted. Its function is as follows. Snaclec that induces platelet aggregation in either human platelet rich plasma (PRP) or washed platelet suspensions. It causes aggregation in a dose-dependent manner even in the absence of various platelet agonists such as ADP or von Willebrand factor (vWF). Interestingly, it does not induce aggregation in rabbit PRP. A monoclonal antibody against the platelet GPIb receptor blocks the aggregation induced by trimecetin, suggesting that it acts by binding to GPIb (GP1BA/GP1BB). The sequence is that of Snaclec trimecetin subunit alpha from Protobothrops mucrosquamatus (Taiwan habu).